Reading from the N-terminus, the 256-residue chain is Small ribosomal subunit protein eS1 (256 aa).

A compositionally biased stretch (basic residues) spans 1–18 (MAVGKNKRLSKGKKGLKK). Residues 1 to 20 (MAVGKNKRLSKGKKGLKKKA) are disordered. An N-acetylalanine; partial modification is found at A2.

Belongs to the eukaryotic ribosomal protein eS1 family. In terms of assembly, component of the small ribosomal subunit. Mature ribosomes consist of a small (40S) and a large (60S) subunit. The 40S subunit contains about 33 different proteins and 1 molecule of RNA (18S). The 60S subunit contains about 49 different proteins and 3 molecules of RNA (25S, 5.8S and 5S).

It is found in the cytoplasm. In Chaetomium globosum (strain ATCC 6205 / CBS 148.51 / DSM 1962 / NBRC 6347 / NRRL 1970) (Soil fungus), this protein is Small ribosomal subunit protein eS1.